Reading from the N-terminus, the 494-residue chain is DDB1- and CUL4-associated factor 4 (494 aa).

The disordered stretch occupies residues Met1 to Pro65. Basic residues predominate over residues Lys7–Ala20. A compositionally biased stretch (low complexity) spans Ser51–Ser60. 2 WD repeats span residues Phe367–Gln406 and Gly409–Thr450.

As to quaternary structure, interacts with DDB1 and CUL4A.

It participates in protein modification; protein ubiquitination. May function as a substrate receptor for CUL4-DDB1 E3 ubiquitin-protein ligase complex. This chain is DDB1- and CUL4-associated factor 4 (DCAF4), found in Bos taurus (Bovine).